A 160-amino-acid chain; its full sequence is Glucagon-1 (160 aa).

The N-terminal stretch at 1 to 22 (MSDPGFLAAPVLLLLLVSLASA) is a signal peptide. 3 propeptides span residues 23–40 (SLEQ…RPLS), 74–79 (GGSELQ), and 116–127 (DGGDHLAENSED). A disordered region spans residues 112–132 (KSRRDGGDHLAENSEDKRHAE).

The protein belongs to the glucagon family.

It is found in the secreted. Functionally, promotes hydrolysis of glycogen and lipids, and raises the blood sugar level. This Petromyzon marinus (Sea lamprey) protein is Glucagon-1 (gcg1).